Here is a 147-residue protein sequence, read N- to C-terminus: 3-dehydroquinate dehydratase (147 aa).

Y23 acts as the Proton acceptor in catalysis. Positions 74, 80, and 87 each coordinate substrate. The active-site Proton donor is the H100. Substrate is bound by residues 101–102 (LS) and R111.

It belongs to the type-II 3-dehydroquinase family. Homododecamer.

The catalysed reaction is 3-dehydroquinate = 3-dehydroshikimate + H2O. It participates in metabolic intermediate biosynthesis; chorismate biosynthesis; chorismate from D-erythrose 4-phosphate and phosphoenolpyruvate: step 3/7. Functionally, catalyzes a trans-dehydration via an enolate intermediate. The chain is 3-dehydroquinate dehydratase from Clostridium botulinum (strain Kyoto / Type A2).